A 214-amino-acid polypeptide reads, in one-letter code: 3,4-dihydroxy-2-butanone 4-phosphate synthase (214 aa).

D-ribulose 5-phosphate-binding positions include 37-38 (RE), Asp-42, 150-154 (RRGHT), and Glu-174. Mg(2+) is bound at residue Glu-38. His-153 lines the Mg(2+) pocket.

It belongs to the DHBP synthase family. In terms of assembly, homodimer. The cofactor is Mg(2+). Mn(2+) serves as cofactor.

It catalyses the reaction D-ribulose 5-phosphate = (2S)-2-hydroxy-3-oxobutyl phosphate + formate + H(+). Its pathway is cofactor biosynthesis; riboflavin biosynthesis; 2-hydroxy-3-oxobutyl phosphate from D-ribulose 5-phosphate: step 1/1. In terms of biological role, catalyzes the conversion of D-ribulose 5-phosphate to formate and 3,4-dihydroxy-2-butanone 4-phosphate. The sequence is that of 3,4-dihydroxy-2-butanone 4-phosphate synthase from Nitratidesulfovibrio vulgaris (strain DP4) (Desulfovibrio vulgaris).